Here is a 719-residue protein sequence, read N- to C-terminus: Disintegrin and metalloproteinase domain-containing protein 18 (719 aa).

Positions 1–19 are cleaved as a signal peptide; sequence MPLLFILAELAMLFARLDS. A propeptide spanning residues 20 to 179 is cleaved from the precursor; the sequence is EGICLHITVP…QDKNHSQLLP (160 aa). N-linked (GlcNAc...) asparagine glycans are attached at residues N61, N75, N121, N152, N173, N244, and N331. Topologically, residues 173–683 are extracellular; it reads NHSQLLPQSL…TKRLSKNEDS (511 aa). The Peptidase M12B domain occupies 180–378; the sequence is QSLKLHIIVG…FDTQCLGDLS (199 aa). 3 cysteine pairs are disulfide-bonded: C289-C373, C332-C357, and C334-C339. N-linked (GlcNAc...) asparagine glycosylation is found at N356 and N405. The 90-residue stretch at 387 to 476 folds into the Disintegrin domain; that stretch reads QAVCGNGIME…HCVPDTFALN (90 aa). Residues C447 and C468 are joined by a disulfide bond. N-linked (GlcNAc...) asparagine glycosylation is found at N607, N614, and N621. Positions 616–650 constitute an EGF-like domain; the sequence is TGNDCNATKKCKGNGICNNFGNCQCFPDYRPPDCN. 3 cysteine pairs are disulfide-bonded: C620–C632, C626–C638, and C640–C649. Residues 684-704 traverse the membrane as a helical segment; sequence WVILGFFIFLPFIVTFLVGIM. Residues 705-719 are Cytoplasmic-facing; it reads KRNERKIVPQGEHKI.

Post-translationally, the prodomain and the metalloprotease-like domain are cleaved during the epididymal maturation of the spermatozoa. Expressed specifically in testis.

The protein localises to the membrane. In terms of biological role, sperm surface membrane protein that may be involved in spermatogenesis and fertilization. This is a non catalytic metalloprotease-like protein. The chain is Disintegrin and metalloproteinase domain-containing protein 18 (Adam18) from Mus musculus (Mouse).